A 324-amino-acid polypeptide reads, in one-letter code: IDS-like terpene synthase 3 (324 aa).

Mg(2+)-binding residues include D77 and D81.

This sequence belongs to the FPP/GGPP synthase family. Mg(2+) serves as cofactor.

It carries out the reaction (2E)-geranyl diphosphate + H2O = linalool + diphosphate. The enzyme catalyses (2E,6E)-farnesyl diphosphate + H2O = (6E)-nerolidol + diphosphate. In terms of biological role, terpene synthase that shows monoterpene synthase activity and produces linalool, using geranyl diphosphate (GPP) as substrate. Also shows sesquiterpene synthase activity as it is able to convert farnesyl diphosphate (FPP) into (E)-nerolidol. This chain is IDS-like terpene synthase 3, found in Melampsora lini (Rust fungus).